An 834-amino-acid chain; its full sequence is Phenylalanine--tRNA ligase beta subunit (834 aa).

The tRNA-binding domain maps to 48–159 (GDIERPLVVG…GTAEPGTDAN (112 aa)). The B5 domain occupies 411-492 (PAPEPIRMDI…RLEGLEQIPS (82 aa)). Mg(2+)-binding residues include Asp-470, Asp-476, Glu-479, and Glu-480. The 94-residue stretch at 740–833 (SPFPAVLQDV…AADAVGAVLR (94 aa)) folds into the FDX-ACB domain.

Belongs to the phenylalanyl-tRNA synthetase beta subunit family. Type 1 subfamily. In terms of assembly, tetramer of two alpha and two beta subunits. The cofactor is Mg(2+).

The protein localises to the cytoplasm. The enzyme catalyses tRNA(Phe) + L-phenylalanine + ATP = L-phenylalanyl-tRNA(Phe) + AMP + diphosphate + H(+). The chain is Phenylalanine--tRNA ligase beta subunit from Nocardia farcinica (strain IFM 10152).